Consider the following 369-residue polypeptide: Bi-functional coumaroyl CoA and feruloyl CoA ortho-hydroxylase Diox2 (369 aa).

In terms of domain architecture, Fe2OG dioxygenase spans 215–318; that stretch reads GSRRVNLNYY…RISVPLFVNP (104 aa). Tyrosine 224 serves as a coordination point for 2-oxoglutarate. Residues histidine 239, aspartate 241, and histidine 299 each contribute to the Fe cation site. 2 residues coordinate 2-oxoglutarate: arginine 309 and serine 311.

This sequence belongs to the iron/ascorbate-dependent oxidoreductase family. L-ascorbate serves as cofactor. The cofactor is Fe(2+).

The enzyme catalyses (E)-4-coumaroyl-CoA + 2-oxoglutarate + O2 = (E)-2,4-dihydroxycinnamoyl-CoA + succinate + CO2. The catalysed reaction is (E)-feruloyl-CoA + 2-oxoglutarate + O2 = (E)-6-hydroxyferuloyl-CoA + succinate + CO2. It participates in phenylpropanoid metabolism. In terms of biological role, 2-oxoglutarate (OG)- and Fe(II)-dependent dioxygenase (2OGD) involved in scopoletin and umbelliferone biosynthesis. Converts feruloyl CoA into 6'-hydroxyferuloyl CoA, and p-coumaroyl CoA into 2,4-dihydroxycinnamoyl-CoA. The protein is Bi-functional coumaroyl CoA and feruloyl CoA ortho-hydroxylase Diox2 of Ruta graveolens (Common rue).